The following is a 266-amino-acid chain: Methionine aminopeptidase (266 aa).

Histidine 80 provides a ligand contact to substrate. 3 residues coordinate a divalent metal cation: aspartate 98, aspartate 109, and histidine 172. Substrate is bound at residue histidine 179. A divalent metal cation is bound by residues glutamate 206 and glutamate 237.

It belongs to the peptidase M24A family. Methionine aminopeptidase type 1 subfamily. As to quaternary structure, monomer. It depends on Co(2+) as a cofactor. Requires Zn(2+) as cofactor. The cofactor is Mn(2+). Fe(2+) serves as cofactor.

It carries out the reaction Release of N-terminal amino acids, preferentially methionine, from peptides and arylamides.. Its function is as follows. Removes the N-terminal methionine from nascent proteins. The N-terminal methionine is often cleaved when the second residue in the primary sequence is small and uncharged (Met-Ala-, Cys, Gly, Pro, Ser, Thr, or Val). Requires deformylation of the N(alpha)-formylated initiator methionine before it can be hydrolyzed. This is Methionine aminopeptidase from Buchnera aphidicola subsp. Baizongia pistaciae (strain Bp).